We begin with the raw amino-acid sequence, 182 residues long: uncharacterized protein (182 aa).

The Macro domain occupies 1-177; sequence MEFSVGGVEV…KFLEVFKKHL (177 aa).

This is an uncharacterized protein from Pyrobaculum aerophilum (strain ATCC 51768 / DSM 7523 / JCM 9630 / CIP 104966 / NBRC 100827 / IM2).